The following is a 597-amino-acid chain: Adenine deaminase (597 aa).

Belongs to the metallo-dependent hydrolases superfamily. Adenine deaminase family. Mn(2+) serves as cofactor.

The catalysed reaction is adenine + H2O + H(+) = hypoxanthine + NH4(+). This is Adenine deaminase from Paracoccus denitrificans (strain Pd 1222).